A 632-amino-acid polypeptide reads, in one-letter code: Maltase 1 (632 aa).

Over residues 1-29 the composition is skewed to basic and acidic residues; that stretch reads MEEGERWREGHVYQRSSETRKPTNYDRPD. The segment at 1-30 is disordered; it reads MEEGERWREGHVYQRSSETRKPTNYDRPDS. Asparagine 179 and asparagine 212 each carry an N-linked (GlcNAc...) asparagine glycan. Aspartate 280 (nucleophile) is an active-site residue. Asparagine 333 carries N-linked (GlcNAc...) asparagine glycosylation. Glutamate 348 (proton donor) is an active-site residue. N-linked (GlcNAc...) asparagine glycans are attached at residues asparagine 461, asparagine 575, and asparagine 578.

Belongs to the glycosyl hydrolase 13 family.

It carries out the reaction Hydrolysis of terminal, non-reducing (1-&gt;4)-linked alpha-D-glucose residues with release of alpha-D-glucose.. The polypeptide is Maltase 1 (Mal-B1) (Drosophila virilis (Fruit fly)).